A 150-amino-acid chain; its full sequence is Large ribosomal subunit protein bL9 (150 aa).

It belongs to the bacterial ribosomal protein bL9 family.

Its function is as follows. Binds to the 23S rRNA. The chain is Large ribosomal subunit protein bL9 from Paracidovorax citrulli (strain AAC00-1) (Acidovorax citrulli).